A 444-amino-acid polypeptide reads, in one-letter code: MMWIQKNPFLGLLLCSFLAFFQSTYAEVGKLVCFYDAQSFVREGPAQMSLAELEPALQFCNFLVYGYAGIDAVTYKIKSLDPSLTNDRQHYRHITALRKKYPHVRFLLSVGGDRDVNSEGVADSDKYLRLLEQSEHRKSFQASVLAELNNNGFDGIDLAWQFPKNRPKLQQGVFKRVWGSLRGWFSSSSVDEKSEEHREQFATLLEELQSDLRRGGQLLTVSMLPHVSAELFIDVPKVLSNVDFVNLGTYDFQTPERDPKVADLPTPLYAMYDRDPSHNVQYQVQYWMNQTSEISVHKLHVGVTSYGRAWNMTRNSGITGYPPIPAANGAAPPGRQTVTPGLLSWPEICDLLQQQPQDREVPHLRKVGDPTKRFGIYAYRAADDQGENGLWVGYEDPLTAAIKAGFVHAQGLGGVAFHDLSMDDFRGQCAGEKFPILRSIKFKL.

The N-terminal stretch at 1 to 26 (MMWIQKNPFLGLLLCSFLAFFQSTYA) is a signal peptide. The GH18 domain maps to 29 to 444 (GKLVCFYDAQ…PILRSIKFKL (416 aa)). C33 and C60 are oxidised to a cystine. N-linked (GlcNAc...) asparagine glycans are attached at residues N289 and N311. An intrachain disulfide couples C349 to C429.

Belongs to the glycosyl hydrolase 18 family. IDGF subfamily. Post-translationally, glycosylated.

The protein resides in the secreted. Probably required to stimulate the proliferation, polarization and motility of imaginal disk cells. May act by stabilizing the binding of insulin-like peptides to its receptor through a simultaneous interaction with both molecules to form a multiprotein signaling complex. The sequence is that of Chitinase-like protein Idgf5 (Idgf5) from Drosophila melanogaster (Fruit fly).